Consider the following 926-residue polypeptide: Storkhead-box protein 2 (926 aa).

Disordered stretches follow at residues 1 to 32 (MKKT…RSEK), 338 to 391 (EEEK…HLDI), 452 to 529 (EMPF…SYID), 564 to 588 (KEPS…YGEL), 632 to 672 (GVKK…GGVA), 724 to 803 (LKSH…GTMQ), and 825 to 926 (LAPK…VTSV). The span at 18–32 (FSDRASDRMRSRSEK) shows a compositional bias: basic and acidic residues. Over residues 353-378 (HSGRSKKSRTHRKSHGKSRSHSKTRV) the composition is skewed to basic residues. The segment covering 379 to 391 (SKGDPSDGSHLDI) has biased composition (basic and acidic residues). Over residues 463–472 (SHSKVHRSHS) the composition is skewed to basic residues. The span at 473–495 (HTQDRRSRNERSNKAKERSRSMD) shows a compositional bias: basic and acidic residues. Over residues 518-529 (QDDQTPSQSYID) the composition is skewed to polar residues. A compositionally biased stretch (basic and acidic residues) spans 632–658 (GVKKLSPSDRQVPHSSREPVGHKEESP). Polar residues predominate over residues 746–769 (LGTSAAQAMPASQRQQESGGNQEA). The span at 785-799 (GANKNTEEEKNREDV) shows a compositional bias: basic and acidic residues. Polar residues-rich tracts occupy residues 847–884 (MDSS…QNPA) and 914–926 (KPSN…VTSV).

This Homo sapiens (Human) protein is Storkhead-box protein 2 (STOX2).